The following is a 426-amino-acid chain: Mitogen-activated protein kinase 8 (426 aa).

One can recognise a Protein kinase domain in the interval 26-321 (YQNLKPIGSG…VDDALQHPYI (296 aa)). ATP-binding positions include 33-38 (GSGAQG) and K55. Residue D151 is the Proton acceptor of the active site. A Phosphothreonine modification is found at T183. The TXY motif lies at 183–185 (TPY). Y185 carries the phosphotyrosine modification. The interval 375 to 426 (QPAPLGAAVTDGSQAHTSSSSGDASSMSTDPTLPSDTDSSLETSAGTLGCCR) is disordered. Over residues 384–404 (TDGSQAHTSSSSGDASSMSTD) the composition is skewed to low complexity. Residues 405–420 (PTLPSDTDSSLETSAG) are compositionally biased toward polar residues.

The protein belongs to the protein kinase superfamily. CMGC Ser/Thr protein kinase family. MAP kinase subfamily. The cofactor is Mg(2+). Dually phosphorylated on Thr-183 and Tyr-185, which activates the enzyme. Strongly expressed in presumptive ectoderm and mesoderm regions and weakly expressed in endoderm regions during early stages of embryo development. Expressed in the head and dorsal regions during neurula and tailbud stages.

It is found in the cytoplasm. Its subcellular location is the nucleus. The protein localises to the synapse. The enzyme catalyses L-seryl-[protein] + ATP = O-phospho-L-seryl-[protein] + ADP + H(+). It catalyses the reaction L-threonyl-[protein] + ATP = O-phospho-L-threonyl-[protein] + ADP + H(+). Activated by threonine and tyrosine phosphorylation, potentially by the dual-specificity kinase, MKK7. Indirectly activated by Wnt5a. In terms of biological role, responds to activation by environmental stress and pro-inflammatory cytokines by phosphorylating a number of transcription factors, and thus regulating transcriptional activity. Regulates morphogenic cell movements, controlling convergent extension during gastrulation. May play a role in the regulation of the circadian clock. The chain is Mitogen-activated protein kinase 8 (mapk8) from Xenopus laevis (African clawed frog).